Reading from the N-terminus, the 514-residue chain is Ankyrin repeat domain-containing protein 34B (514 aa).

ANK repeat units follow at residues 9 to 38, 42 to 79, 83 to 113, and 117 to 146; these read SEGN…YINE, RGET…DPNI, SGKT…DLSL, and SSYS…AKGK. The disordered stretch occupies residues 220–249; that stretch reads NDDTWDPGSPVRKPALAPKGPKLPHAPPWV. Ser-263 bears the Phosphoserine mark. Thr-272 is subject to Phosphothreonine. Phosphoserine is present on Ser-296.

Belongs to the ANKRD34 family. Post-translationally, phosphorylated.

It localises to the cytoplasm. The protein localises to the nucleus. This chain is Ankyrin repeat domain-containing protein 34B (ANKRD34B), found in Homo sapiens (Human).